The chain runs to 76 residues: Small ribosomal subunit protein bS21C (76 aa).

The segment at 52 to 76 is disordered; sequence GRQRKLARKQMQREGLLPTKPRKDK.

This sequence belongs to the bacterial ribosomal protein bS21 family.

The chain is Small ribosomal subunit protein bS21C (rpsU3) from Agrobacterium fabrum (strain C58 / ATCC 33970) (Agrobacterium tumefaciens (strain C58)).